We begin with the raw amino-acid sequence, 638 residues long: MQALMEMQIGASEVVQVLDTGCAVLPPESPLPMPEQSLRKGRLQVPRQRTAPLGIGLRRFYLIGGTMAMSLIATWVMLAVMWPGGINVLEGCLLVLFMFLFAWVTMSFASALAGFFCVVFGGGRKLGIDPQVPLPDLHTYTALLVPTYHEDPCRLLAGLQAIYESLAETGQLEHFDFFVLSDSRREEFGLAEEREYAALCERLGAHDRIFYRRRADNAGRKAGNIADWVRRFGGAYQQMLILDADSVMTGDTIVRLVAAMESNPDVGLIQSLPVVVGGRTLFARMQQFGACVYGPIIAYGVAWWHGAESNYWGHNAVIRTKAFADHAGLPALPGRKPFGGHVLSHDFVEAALIRRGGWATHMVPYLQGSYEEGPPTLTDLLIRDRRWCQGNLQHAKIVTAAGLHWISRMHMLIGIGHYFTAPMWGLLMLVGIAIPLVGDGIDLTAGMHFSPAHYWHGRTDGDVLWIFTFTMFVLLAPKLLAYFALLFKPYERRACGGALRVLLSILLESILAALMAPVVMYLQSRGVFEVLAGKDSGWDAQQRDDGKLSWSVLLRSYGGLSVLGVLIGALAYTVSPPLAMWMSPVVLGMAFSVPVVALTSHRLVGAVLRRWGIFLIPEETAPSKVLIRVAELRRARQP.

The next 6 helical transmembrane spans lie at 60 to 82 (FYLI…AVMW), 97 to 119 (FMFL…FCVV), 415 to 437 (IGHY…IPLV), 464 to 486 (LWIF…FALL), 499 to 521 (LRVL…VVMY), and 578 to 600 (LAMW…ALTS).

It belongs to the glycosyltransferase 2 family. OpgH subfamily.

Its subcellular location is the cell inner membrane. The protein operates within glycan metabolism; osmoregulated periplasmic glucan (OPG) biosynthesis. Involved in the biosynthesis of osmoregulated periplasmic glucans (OPGs). In Xylella fastidiosa (strain 9a5c), this protein is Glucans biosynthesis glucosyltransferase H.